A 489-amino-acid polypeptide reads, in one-letter code: Protein P7 (489 aa).

2 RNA-binding regions span residues 129 to 251 and 321 to 351; these read TSLI…GRML and AGDY…FQVN.

The protein belongs to the phytoreovirus protein P7 family.

Its subcellular location is the virion. It localises to the host cytoplasm. Functionally, probable component of the transcriptional machinery present in the inner capsid. Displays dsRNA binding activity and may play an important role in the sorting of viral RNA and virion assembly. Together with the RNA-directed RNA polymerase P1 and capping enzyme P5, forms an transcriptional complex positioned near the channels situated at each of the five-fold vertices of the core. The protein is Protein P7 of Rice gall dwarf virus (RGDV).